The primary structure comprises 248 residues: Protein maestro (248 aa).

Residues 1–23 form a disordered region; that stretch reads MEQTRKIPNQPLPTPTSQSKKRR. The HEAT repeat unit spans residues 128 to 163; the sequence is SFFIDITLQARTLLDDEDDSVRYSAFVLFGQLASFA.

Prominent expression seen in testis, brain, liver and heart. Weakly expressed in the kidney.

The protein resides in the nucleus. It is found in the nucleolus. The protein is Protein maestro (Mro) of Mus musculus (Mouse).